The sequence spans 552 residues: Acyl-CoA-dependent acyltransferase MAC1 (552 aa).

Belongs to the trichothecene O-acetyltransferase family.

It functions in the pathway secondary metabolite biosynthesis. Acyl-CoA-dependent acyltransferase; part of the gene cluster that mediates the biosynthesis of mannosylerythritol lipids (MELs), surface-active substances that enhance the availability of water-insoluble substrates. Depending on the number of acetyl groups, mannosylerythritol lipids can be differentiated into MEL A (fully acetylated), MEL B and MEL C (monoacetylated at R-6 and R-4, respectively), and the fully deacetylated MEL D. The first step in the pathway is the generation of mannosylerythritol by the glycosyltransferase EMT1 which catalyzes the transfer of GDP-mannose to the C-4 atom of meso-erythritol. This reaction has to be stereospecific, since only mannosyl-D-erythritol is generated. The produced disaccharide is subsequently acylated with fatty acids of various lengths by the acyltransferases MAC1 and MAC2 at positions C-2 and C-3, repectively. The existence of MEL derivatives which carry an acetyl group at C-2 implies that at least MAC1 also accepts acetyl-CoA as a donor. The final step of MEL biosynthesis is the acetylation of the fully acylated mannosylerythritol lipids catalyzed by the acetyl-CoA-dependent acetyltransferase MAT1. MAT1 displays a relaxed regioselectivity and is able to transfer acetylgroups to both positions C-4 and C-6 of the mannosyl moiety. In Pseudozyma antarctica (strain T-34) (Yeast), this protein is Acyl-CoA-dependent acyltransferase MAC1.